Consider the following 335-residue polypeptide: Magnesium-protoporphyrin IX monomethyl ester [oxidative] cyclase (335 aa).

It belongs to the AcsF family. The cofactor is Fe cation.

Its subcellular location is the plastid. The protein localises to the chloroplast. The enzyme catalyses Mg-protoporphyrin IX 13-monomethyl ester + 3 NADPH + 3 O2 + 2 H(+) = 3,8-divinyl protochlorophyllide a + 3 NADP(+) + 5 H2O. It functions in the pathway porphyrin-containing compound metabolism; chlorophyll biosynthesis (light-independent). Functionally, catalyzes the formation of the isocyclic ring in chlorophyll biosynthesis. Mediates the cyclase reaction, which results in the formation of divinylprotochlorophyllide (Pchlide) characteristic of all chlorophylls from magnesium-protoporphyrin IX 13-monomethyl ester (MgPMME). The chain is Magnesium-protoporphyrin IX monomethyl ester [oxidative] cyclase from Cyanidioschyzon merolae (strain NIES-3377 / 10D) (Unicellular red alga).